The following is a 229-amino-acid chain: NAD(P)H-hydrate epimerase (229 aa).

Positions 9–216 (AISVDEELFN…KLEEKYAMNL (208 aa)) constitute a YjeF N-terminal domain. 59–63 (NNGGD) contacts (6S)-NADPHX. Asparagine 60 and aspartate 124 together coordinate K(+). (6S)-NADPHX-binding positions include 128–134 (GFSFKPP) and aspartate 157. A K(+)-binding site is contributed by serine 160.

Belongs to the NnrE/AIBP family. The cofactor is K(+).

It carries out the reaction (6R)-NADHX = (6S)-NADHX. It catalyses the reaction (6R)-NADPHX = (6S)-NADPHX. Functionally, catalyzes the epimerization of the S- and R-forms of NAD(P)HX, a damaged form of NAD(P)H that is a result of enzymatic or heat-dependent hydration. This is a prerequisite for the S-specific NAD(P)H-hydrate dehydratase to allow the repair of both epimers of NAD(P)HX. This chain is NAD(P)H-hydrate epimerase, found in Anopheles gambiae (African malaria mosquito).